A 386-amino-acid polypeptide reads, in one-letter code: S-adenosylmethionine synthase (386 aa).

His-16 contributes to the ATP binding site. Asp-18 is a Mg(2+) binding site. Glu-44 serves as a coordination point for K(+). 2 residues coordinate L-methionine: Glu-57 and Gln-100. The segment at 100–110 (QSPDINQGVDR) is flexible loop. Residues 164–166 (DGK), 230–231 (KF), Asp-239, 245–246 (RK), Ala-262, and Lys-266 contribute to the ATP site. Asp-239 serves as a coordination point for L-methionine. Lys-270 is an L-methionine binding site.

Belongs to the AdoMet synthase family. As to quaternary structure, homotetramer; dimer of dimers. Requires Mg(2+) as cofactor. It depends on K(+) as a cofactor.

The protein localises to the cytoplasm. It catalyses the reaction L-methionine + ATP + H2O = S-adenosyl-L-methionine + phosphate + diphosphate. Its pathway is amino-acid biosynthesis; S-adenosyl-L-methionine biosynthesis; S-adenosyl-L-methionine from L-methionine: step 1/1. Catalyzes the formation of S-adenosylmethionine (AdoMet) from methionine and ATP. The overall synthetic reaction is composed of two sequential steps, AdoMet formation and the subsequent tripolyphosphate hydrolysis which occurs prior to release of AdoMet from the enzyme. This Wolinella succinogenes (strain ATCC 29543 / DSM 1740 / CCUG 13145 / JCM 31913 / LMG 7466 / NCTC 11488 / FDC 602W) (Vibrio succinogenes) protein is S-adenosylmethionine synthase.